We begin with the raw amino-acid sequence, 315 residues long: Neuroguidin (315 aa).

Alanine 2 carries the N-acetylalanine modification. Residues serine 13–alanine 41 are a coiled coil. Residues alanine 41–proline 174 form a necessary for interaction with EIF4E region. Phosphoserine occurs at positions 121, 142, and 143. Residues glutamate 124–lysine 169 are disordered. Over residues glutamate 144–serine 156 the composition is skewed to acidic residues. A coiled-coil region spans residues tyrosine 181–valine 205. A phosphoserine mark is found at serine 204 and serine 214. The tract at residues aspartate 277–arginine 315 is disordered. The span at isoleucine 295–arginine 315 shows a compositional bias: basic residues.

Belongs to the SAS10 family. In terms of assembly, part of the small subunit (SSU) processome, composed of more than 70 proteins and the RNA chaperone small nucleolar RNA (snoRNA) U3. Interacts with CPEB1 and EIF4E.

The protein localises to the nucleus. It is found in the nucleolus. It localises to the chromosome. Its subcellular location is the centromere. The protein resides in the cytoplasm. The protein localises to the cell projection. It is found in the axon. It localises to the dendrite. Its subcellular location is the filopodium. Its function is as follows. Part of the small subunit (SSU) processome, first precursor of the small eukaryotic ribosomal subunit. During the assembly of the SSU processome in the nucleolus, many ribosome biogenesis factors, an RNA chaperone and ribosomal proteins associate with the nascent pre-rRNA and work in concert to generate RNA folding, modifications, rearrangements and cleavage as well as targeted degradation of pre-ribosomal RNA by the RNA exosome. Its dissociation from the complex determines the transition from state pre-A1 to state pre-A1*. Inhibits mRNA translation in a cytoplasmic polyadenylation element (CPE)-dependent manner. The protein is Neuroguidin of Homo sapiens (Human).